The sequence spans 437 residues: MMSVTVETLENLERKVVLSLPWSEINAETDKKLKQTQRRAKIDGFRPGKAPLKMIAQMYGASAQNDVINELVQRRFHDVAVAQELKVAGFPRFEGVEEQDDKESFKVAAIFEVFPEVVIGDLSAQEVEKVTASVGDAEVDQTVEILRKQRTRFNHVEREARNGDRVIIDFEGKIDGEPFAGGASKNYAFVLGASQMLPEFEAGVVGMKAGESKDVTVNFPEDYHGKDVAGKTAVFTITLNNVSEATLPEVDADFAKALGIADGDVAKMREEVKKNVSREVERRVNEQTKESVMNALLKAVELKAPVALVNEEAARLANEMKQNFVNQGMADAANLDLPLDMFKEQAERRVSLGLILAKLVDENKLEPTEEQIKAVVANFAESYEDPQEVIDWYYAEPSRLQAPTSLAIESNVVDFVLGKAKVNEKALSFDEVMGAQA.

The PPIase FKBP-type domain maps to 163-248 (GDRVIIDFEG…LNNVSEATLP (86 aa)).

It belongs to the FKBP-type PPIase family. Tig subfamily.

It localises to the cytoplasm. It catalyses the reaction [protein]-peptidylproline (omega=180) = [protein]-peptidylproline (omega=0). In terms of biological role, involved in protein export. Acts as a chaperone by maintaining the newly synthesized protein in an open conformation. Functions as a peptidyl-prolyl cis-trans isomerase. The sequence is that of Trigger factor (tig) from Neisseria meningitidis serogroup A / serotype 4A (strain DSM 15465 / Z2491).